Consider the following 475-residue polypeptide: Mucin-1 (475 aa).

An N-terminal signal peptide occupies residues 1 to 23; sequence MTPGTQSLFFLLLLLTVLTVVTG. Residues 23-252 are disordered; it reads GSGHASSTPG…SPLTSSNHST (230 aa). Residues 24 to 380 lie on the Extracellular side of the membrane; sequence SGHASSTPGG…QSGAGVPGWG (357 aa). Positions 38 to 48 are enriched in polar residues; it reads SATQRSSMPSS. Residues 54–75 are compositionally biased toward low complexity; that stretch reads VSMTSSVLSSHSPGSGSSTTQG. 5 tandem repeats follow at residues 86 to 105, 106 to 125, 126 to 145, 146 to 165, and 166 to 185. The interval 86-185 is 5 X 20 AA approximate tandem repeats; the sequence is PASGSAATWG…HNVTSASGSA (100 aa). Positions 90 to 102 are enriched in polar residues; sequence SAATWGQDVTSVP. 2 O-linked (GalNAc...) threonine glycosylation sites follow: T93 and T99. S100 is a glycosylation site (O-linked (GalNAc...) serine). T104 carries O-linked (GalNAc...) threonine glycosylation. Residues 109 to 122 show a composition bias toward polar residues; that stretch reads GSTTSPAQDVTSAP. A glycan (N-linked (GlcNAc...) asparagine) is linked at N177. Over residues 180–190 the composition is skewed to low complexity; sequence SASGSASGSAS. Polar residues-rich tracts occupy residues 191–213 and 233–252; these read TLVH…TPFS and DASS…NHST. Residues N195, N249, N275, and N353 are each glycosylated (N-linked (GlcNAc...) asparagine). Residues 259–368 enclose the SEA domain; it reads GVSFFFLSFH…VSVSDVPFPF (110 aa). A helical transmembrane segment spans residues 381–401; that stretch reads IALLVLVCVLVALAIVYLIAL. The Cytoplasmic segment spans residues 402–475; it reads AVCQCRRKNY…PAVAATSANL (74 aa). Residues C404 and C406 are each lipidated (S-palmitoyl cysteine). The segment at 412 to 448 is interaction with P53; that stretch reads GQLDIFPARDAYHPMSEYPTYHTHGRYVPPSSTNRSP. Y423 is subject to Phosphotyrosine; by PDGFR. Residues 423–426 carry the Interaction with GRB2 motif; the sequence is YHPM. The residue at position 432 (Y432) is a Phosphotyrosine. The disordered stretch occupies residues 435–460; that stretch reads HGRYVPPSSTNRSPYEKVSEGNGGSS. Phosphotyrosine; by PDGFR is present on Y438. The segment at 443–450 is required for interaction with GSK3B; the sequence is STNRSPYE. Position 444 is a phosphothreonine; by PKC/PRKCD (T444). Residue S447 is modified to Phosphoserine; by GSK3-beta. Y449 carries the phosphotyrosine; by CSK, EGFR and SRC modification. An Interaction with SRC and ESR1 motif is present at residues 449 to 452; that stretch reads YEKV. The tract at residues 453-461 is required for interaction with beta- and gamma-catenins; the sequence is SEGNGGSSL. At Y463 the chain carries Phosphotyrosine. Positions 463-466 match the Required for interaction with AP1S2 motif; sequence YTNP.

The alpha subunit forms a tight, non-covalent heterodimeric complex with the proteolytically-released beta-subunit. Binds directly the SH2 domain of GRB2, and forms a MUC1/GRB2/SOS1 complex involved in RAS signaling. The cytoplasmic tail (MUC1CT) interacts with several proteins such as SRC, CTNNB1 and ERBs. Interaction with the SH2 domain of CSK decreases interaction with GSK3B. Interacts with CTNNB1/beta-catenin and JUP/gamma-catenin and promotes cell adhesion. Interaction with JUP/gamma-catenin is induced by heregulin. Binds PRKCD, ERBB2, ERBB3 and ERBB4. Heregulin (HRG) stimulates the interaction with ERBB2 and, to a much lesser extent, the interaction with ERBB3 and ERBB4. Interacts with P53 in response to DNA damage. Interacts with KLF4. Interacts with estrogen receptor alpha/ESR1, through its DNA-binding domain, and stimulates its transcription activity. Binds ADAM17. In terms of processing, probably both N- and O-glycosylated (in repeat region). Post-translationally, proteolytic cleavage in the SEA domain occurs in the endoplasmic reticulum by an autoproteolytic mechanism and requires the full-length SEA domain as well as requiring a Ser, Thr or Cys residue at the P + 1 site. Ectodomain shedding is mediated by ADAM17 in uterine epithelial cells. Dual palmitoylation on cysteine residues in the CQC motif is required for recycling from endosomes back to the plasma membrane. In terms of processing, phosphorylated on tyrosines and serine residues in the C-terminal. Phosphorylation on tyrosines in the C-terminal increases the nuclear location of MUC1 and beta-catenin. Phosphorylation by PKC delta induces binding of MUC1 to beta-catenin/CTNNB1 and thus decreases the formation of the beta-catenin/E-cadherin complex. Src-mediated phosphorylation inhibits interaction with GSK3B. Csk- or Src- or EGFR-mediated phosphorylation on Tyr-449 increases binding to beta-catenin/CTNNB1. GSK3B-mediated phosphorylation on Ser-447 decreases this interaction but restores the formation of the beta-cadherin/E-cadherin complex. On T-cell receptor activation, phosphorylated by LCK. PDGFR-mediated phosphorylation increases nuclear colocalization of MUC1CT and CTNNB1.

It localises to the apical cell membrane. Its subcellular location is the cell membrane. The protein resides in the cytoplasm. The protein localises to the nucleus. In terms of biological role, the alpha subunit has cell adhesive properties. Can act both as an adhesion and an anti-adhesion protein. May provide a protective layer on epithelial cells against bacterial and enzyme attack. The beta subunit contains a C-terminal domain which is involved in cell signaling, through phosphorylations and protein-protein interactions. Modulates signaling in ERK, Src and NF-kappaB pathways. In activated T-cells, influences directly or indirectly the Ras/MAPK pathway. Promotes tumor progression. Regulates P53-mediated transcription and determines cell fate in the genotoxic stress response. Binds, together with KLF4, the PE21 promoter element of P53 and represses P53 activity. The protein is Mucin-1 (MUC1) of Hylobates lar (Lar gibbon).